The chain runs to 647 residues: Sodium/nucleoside cotransporter 1 (647 aa).

The Cytoplasmic portion of the chain corresponds to 1 to 79 (MEDNTPRQRD…VRRFCREHTQ (79 aa)). Residues 34–58 (EGRAPGSDSSPAEVGGGWSKAGPEH) are disordered. A helical transmembrane segment spans residues 80 to 103 (LFRWICTGLLCTAFAAFLLIACLL). At 104-108 (DFQRA) the chain is on the extracellular side. Residues 109 to 127 (LALFVLFCVVLFFLAHSLL) form a helical membrane-spanning segment. At 128–146 (KRLLGPKLLRCVKPLRHPC) the chain is on the cytoplasmic side. A helical transmembrane segment spans residues 147-166 (LNLWFKRGLALAAFLGLVLW). The Extracellular portion of the chain corresponds to 167 to 177 (LVLDTAQRPEQ). Residues 178–194 (LVSFGGICVFILLLFAG) traverse the membrane as a helical segment. At 195–200 (SKHHRA) the chain is on the cytoplasmic side. A helical transmembrane segment spans residues 201 to 221 (VSWRAVSWGLGLQFALGLFVI). The Extracellular portion of the chain corresponds to 222–260 (RTEPGFIAFQWLGDQIQIFLSYTEAGSSFVFGEALVKDV). The chain crosses the membrane as a helical span at residues 261-282 (FAFQVLPIIVFFSCAMSVLYYV). Topologically, residues 283-293 (GLMQWVILKIS) are cytoplasmic. The helical transmembrane segment at 294-317 (WLMQATMGTTATETLSVAGNIFVS) threads the bilayer. Topologically, residues 318–336 (QTEAPLLIRPYLADMTLSE) are extracellular. Residues 337 to 359 (IHVVMTGGYATIAGSLLGAYISF) traverse the membrane as a helical segment. Residues 360–365 (GIDAAS) are Cytoplasmic-facing. Residues 366 to 385 (LIAASVMAAPCALALSKLVY) form a helical membrane-spanning segment. Over 386–422 (PEVEESKFKREEGVKLTYGDAQNLLEAASSGAAMSVR) the chain is Extracellular. Residues 423–445 (VVTNIAANLIAFLAVLAFINAAL) traverse the membrane as a helical segment. The Cytoplasmic segment spans residues 446–456 (SWLGDMVDVQG). A helical transmembrane segment spans residues 457-478 (LSFQLICSYVLRPVAFLMGVAW). The Extracellular portion of the chain corresponds to 479 to 533 (EDCPVVAELLGMKLFLNEFVAYQELSGYKQRRLAGAEEWVGSRKQWISVRAEILT). Residues 534–557 (TYALCGFANFSSIGIMLGGLTSMV) form a helical membrane-spanning segment. Topologically, residues 558–568 (PQRKGDFSQIV) are cytoplasmic. A helical transmembrane segment spans residues 569–591 (LRALCTGACVSLVNACVAGILYV). Over 592–647 (PRGAEVDCVSFLNTTLSSSSFEVYQCCRQFFQSTSLEFSPEALDNCCRFYNHTICV) the chain is Extracellular. 2 N-linked (GlcNAc...) asparagine glycosylation sites follow: asparagine 604 and asparagine 642.

This sequence belongs to the concentrative nucleoside transporter (CNT) (TC 2.A.41) family. Post-translationally, N-glycosylated. N-glycosylation is required for localization to the plasma membrane and the transporter activity.

It is found in the cell membrane. It localises to the apical cell membrane. The catalysed reaction is uridine(out) + Na(+)(out) = uridine(in) + Na(+)(in). The enzyme catalyses thymidine(out) + Na(+)(out) = thymidine(in) + Na(+)(in). It carries out the reaction cytidine(out) + Na(+)(out) = cytidine(in) + Na(+)(in). It catalyses the reaction adenosine(out) + Na(+)(out) = adenosine(in) + Na(+)(in). With respect to regulation, due to its high apparent affinity but slow transport, adenosine could act as a negative regulator of pyrimidine transport under some conditions. Sodium and pyrimidine nucleoside symporter of the plasma membrane that imports uridine, thymidine and cytidine into cells by coupling their transport to the transmembrane sodium electrochemical gradient. Also transports adenosine, an atypical substrate transported with high apparent affinity, but low maximum velocity. Therefore, exhibits the transport characteristics of the nucleoside transport system cit or N2 subtype (N2/cit). Involved in renal nucleoside (re)absorption. The polypeptide is Sodium/nucleoside cotransporter 1 (SLC28A1) (Sus scrofa (Pig)).